The sequence spans 607 residues: Elongation factor 4 (607 aa).

A tr-type G domain is found at 11-193; sequence EKIRNFSIIA…QIVEKVPAPT (183 aa). Residues 23 to 28 and 140 to 143 contribute to the GTP site; these read DHGKST and NKID.

It belongs to the TRAFAC class translation factor GTPase superfamily. Classic translation factor GTPase family. LepA subfamily.

The protein localises to the cell membrane. It catalyses the reaction GTP + H2O = GDP + phosphate + H(+). Required for accurate and efficient protein synthesis under certain stress conditions. May act as a fidelity factor of the translation reaction, by catalyzing a one-codon backward translocation of tRNAs on improperly translocated ribosomes. Back-translocation proceeds from a post-translocation (POST) complex to a pre-translocation (PRE) complex, thus giving elongation factor G a second chance to translocate the tRNAs correctly. Binds to ribosomes in a GTP-dependent manner. This is Elongation factor 4 from Streptococcus gordonii (strain Challis / ATCC 35105 / BCRC 15272 / CH1 / DL1 / V288).